The sequence spans 868 residues: Leucine-rich repeat receptor-like serine/threonine-protein kinase At2g14510 (868 aa).

A signal peptide spans 1–23 (METRNKFMLLACATFSIMSLVKS). The Extracellular portion of the chain corresponds to 24–510 (QNQQGFISLD…KHQPKSWLVA (487 aa)). N-linked (GlcNAc...) asparagine glycans are attached at residues Asn-48, Asn-68, Asn-231, Asn-235, Asn-258, Asn-291, Asn-433, and Asn-446. 3 LRR repeats span residues 412–435 (RIIS…QNLT), 436–458 (MLRE…LATI), and 460–482 (PLLV…LQDR). N-linked (GlcNAc...) asparagine glycosylation occurs at Asn-495. The helical transmembrane segment at 511 to 531 (IVASISCVAVTIIVLVLIFIF) threads the bilayer. Residues 532–868 (RRRKSSTRKV…TFISDIPSAR (337 aa)) lie on the Cytoplasmic side of the membrane. The 270-residue stretch at 563 to 832 (NNFEVVLGKG…NMTRVAHELN (270 aa)) folds into the Protein kinase domain. ATP is bound by residues 569–577 (LGKGGFGVV) and Lys-590. Position 635 is a phosphotyrosine (Tyr-635). Residue Asp-687 is the Proton acceptor of the active site. Residue Ser-721 is modified to Phosphoserine. A phosphothreonine mark is found at Thr-722 and Thr-727. Residue Tyr-735 is modified to Phosphotyrosine.

This sequence belongs to the protein kinase superfamily. Ser/Thr protein kinase family.

The protein localises to the cell membrane. It catalyses the reaction L-seryl-[protein] + ATP = O-phospho-L-seryl-[protein] + ADP + H(+). It carries out the reaction L-threonyl-[protein] + ATP = O-phospho-L-threonyl-[protein] + ADP + H(+). The chain is Leucine-rich repeat receptor-like serine/threonine-protein kinase At2g14510 from Arabidopsis thaliana (Mouse-ear cress).